The primary structure comprises 753 residues: Rsm22-cox11 tandem protein 1, mitochondrial (753 aa).

The N-terminal 39 residues, 1–39 (MPILTCRYKILFLYNLRNCFTFQNQRCLIPYGTTTTIRW), are a transit peptide targeting the mitochondrion. The [4Fe-4S] cluster site is built by Cys323, Cys329, Cys342, and Cys430. Residues 571 to 591 (IYYLVAISIFALGLTYAAVPL) form a helical membrane-spanning segment. Residues 592-753 (YRLFCSKTGY…TNGNLLTKLN (162 aa)) are Mitochondrial intermembrane-facing.

This sequence in the N-terminal section; belongs to the methyltransferase superfamily. Rsm22 family. In the C-terminal section; belongs to the COX11/CtaG family. Associates with the mitochondrial ribosome (mitoribosome). Only transiently interacts with the mitoribosome. Specific enzymatic cleavages in vivo by mitochondrial processing peptidase (MPP) yield mature proteins including rsm22-1 and cox11-1.

The protein localises to the mitochondrion. The protein resides in the mitochondrion inner membrane. In terms of biological role, mitochondrial ribosome (mitoribosome) assembly factor. Binds at the interface of the head and body domains of the mitochondrial small ribosomal subunit (mt-SSU), occluding the mRNA channel and preventing compaction of the head domain towards the body. Probable inactive methyltransferase: retains the characteristic folding and ability to bind S-adenosyl-L-methionine, but it probably lost its methyltransferase activity. Exerts its effect at some terminal stage of cytochrome c oxidase synthesis, probably by being involved in the insertion of the copper B into subunit I. This chain is Rsm22-cox11 tandem protein 1, mitochondrial (cox1101), found in Schizosaccharomyces pombe (strain 972 / ATCC 24843) (Fission yeast).